The chain runs to 111 residues: Rubredoxin (111 aa).

The Rubredoxin-like domain maps to 11 to 62; it reads LDRFECRSCGYVYEPEKGDNKHDIAPETPFAELPINWRCPVCTAKKAAFTNI. 4 residues coordinate Fe cation: Cys16, Cys19, Cys49, and Cys52.

This sequence belongs to the rubredoxin family. It depends on Fe(3+) as a cofactor.

Its function is as follows. Rubredoxin is a small nonheme, iron protein lacking acid-labile sulfide. Its single Fe, chelated to 4 Cys, functions as an electron acceptor and may also stabilize the conformation of the molecule. Could be involved in hydrogenase-linked redox processes. This Nostoc sp. (strain PCC 7120 / SAG 25.82 / UTEX 2576) protein is Rubredoxin (rub).